The following is a 419-amino-acid chain: Protein FAM217A (419 aa).

Disordered stretches follow at residues 1–23, 100–119, 234–298, and 362–388; these read MGRK…QENL, DKRN…LSES, PSSS…SRSL, and PIPL…HRKS. Positions 7 to 23 are enriched in polar residues; sequence ESCSANPHSSSISQENL. Positions 284 to 298 are enriched in polar residues; the sequence is SLSTAGKSKSNSRSL. Basic residues predominate over residues 378-388; it reads PRTKKKCHRKS.

It belongs to the FAM217 family.

The protein is Protein FAM217A (Fam217a) of Rattus norvegicus (Rat).